Reading from the N-terminus, the 382-residue chain is Chaperone protein DnaJ (382 aa).

The J domain maps to 5-70; sequence DYYDLLGLSK…DKRAAYDRYG (66 aa). Residues 138-216 form a CR-type zinc finger; sequence GTKVPINYVT…CSGSGRVRDE (79 aa). Residues Cys-151, Cys-154, Cys-168, Cys-171, Cys-190, Cys-193, Cys-204, and Cys-207 each coordinate Zn(2+). CXXCXGXG motif repeat units follow at residues 151–158, 168–175, 190–197, and 204–211; these read CSSCSGSG, CNTCHGAG, CHVCNGEG, and CKKCSGSG.

It belongs to the DnaJ family. As to quaternary structure, homodimer. Zn(2+) is required as a cofactor.

It localises to the cytoplasm. In terms of biological role, participates actively in the response to hyperosmotic and heat shock by preventing the aggregation of stress-denatured proteins and by disaggregating proteins, also in an autonomous, DnaK-independent fashion. Unfolded proteins bind initially to DnaJ; upon interaction with the DnaJ-bound protein, DnaK hydrolyzes its bound ATP, resulting in the formation of a stable complex. GrpE releases ADP from DnaK; ATP binding to DnaK triggers the release of the substrate protein, thus completing the reaction cycle. Several rounds of ATP-dependent interactions between DnaJ, DnaK and GrpE are required for fully efficient folding. Also involved, together with DnaK and GrpE, in the DNA replication of plasmids through activation of initiation proteins. This Ehrlichia ruminantium (strain Gardel) protein is Chaperone protein DnaJ.